We begin with the raw amino-acid sequence, 1110 residues long: MVSRKPALAVKELGCISDRDLRQLQRWNLRAATPATDQLMHEIIHQRALEFPEKIAVEAWNGTFTYQQLDRLASHLASCLASRGIGSNDFVPISFHKSRWAIVAMLAVNKSGAAFVPVDPSLPAGRVIHILRQTEARVALACDKRSTAMSEAGISVITVADSMDCEHLDKPLWSPSFPGHNAPAYCLFTSGSTGEPKGCVVGHAAFASIASHSQSAYIHSGSRVLQFASLGFGMGLFEVFCTLSTGATLCIPSDEDRMNCLAHAMTSMNVTWTILSPTTLSTLSPADMDCLVTVVTGGEPLSESQVTVWAPHVRLLQLYGLTECSGMFTVSDQIFSSDNPERNIGYPISGRCWIADPQDHHRLRAIGAVGELLIDTPNLAQNYLHNPAKTAAAFISPPGWIEDQLPARQSRPAVLYKTGDLARFNLDGSICHLGRKDHQLKVRGQRVEPGELEHHLRQLFPAVGDVVVDMACPVEANGVASLTAFILQENECSDDLFVEPTEAFLECVQSVRQSLTKIVPAYMIPNLFLRLGTMPKTVSGKKDRRRLRQEVGLLTWDRLRKYMTVDNARGRAAHTLETESEKILAQIWADLLHLDVGTLGPEDDILALGADSITAMRAVAMARIRGLGLTVSDIFATPTLAEMAQSARVVPTTAVTTHRSVSLVDDNVRELCLSHLREQTSLLDSDEQTPLILPATGMQKFFLDRSSFDYFAYILDGDVDFDRMQAACTTAVNQHSILRTVFVQNASGIFQVTLSSIPTALYHITTARNVADVSEKLWSPNTSKTVTLDHPATRFMLVSNPDAQQHALILRLSHSQYDGLSWPNLVGAIAATYNGSALSPCLQFSDYIRCRYQQDTTAGYNFWRRYLLGYTPTHMRDCTFEATTQSKAVSTDSDAVNVHHTIPSPPDTPDGITMATLIKAAGALVLGQLTRRPDIVIGQTVHGRSSLPLAGIETILGPCLNFVPIHVQIHPTWTAERFLHHVQDSHIQTTAYDYLELADIIEQSTSWAPGTSLGAIFHHQNIDTKMEISLQGMKNSKTIHHLTGSYIHQQMRSEVWVYSMPVDQGLEISIRGSSHVISAPQADELARKLGAFVQTLARHPEQALVNIMAP.

The adenylation stretch occupies residues 47-443 (RALEFPEKIA…GRKDHQLKVR (397 aa)). The 77-residue stretch at 575–651 (TLETESEKIL…EMAQSARVVP (77 aa)) folds into the Carrier domain. Position 612 is an O-(pantetheine 4'-phosphoryl)serine (serine 612). The condensation stretch occupies residues 713 to 1025 (YILDGDVDFD…IFHHQNIDTK (313 aa)).

Belongs to the NRP synthetase family.

It functions in the pathway secondary metabolite biosynthesis. Functionally, nonribisomal peptide synthetase; part of the gene cluster that mediates the biosynthesis of benzomalvin A and D. The pathway begins with the loading of amino acid precursors onto the A domains of the non ribosomal peptide synthetases benY and benZ. BenY and the A1 domain of benZ are loaded with anthranilate (Anth), while the A2 domain of benZ is loaded with phenylalanine (Phe). N-methylation of Phe by the methyltransferase benX may happen before loading of Phe onto benZ, after loading of Phe, or after dipeptide formation. Condensation of Anth with the secondary amine of NmPhe or Phe is catalyzed by the C1 domain of benZ, forming a dipeptide intermediate. This is followed by in trans condensation of the Anth-NmPhe dipeptide with Anth bound to the T domain of benY by the C2 domain of benZ to form the linear tripeptide Anth-NmPhe-Anth. Cyclization and release of the tripeptide is then catalyzed by the C-terminal C domain of benY and the resulting 11-member macrocyclic intermediate is expected to spontaneously collapse to form the benzodiazepine core. Benzomalvin A is in conformational equilibrium with its atropisomer, benzomalvin D. The polypeptide is Nonribisomal peptide synthetase benY (Aspergillus terreus).